We begin with the raw amino-acid sequence, 287 residues long: MKNVLSIQSHVIYGHAGNSAAVFPMQRLGVNVWPLNTVQLSNHMQYGHWAGSAIDAAKMEQLVDGIAAIGALKRCDAVLSGFLGSPAQARAAVEIVRTVKATNPNAWYFCDPAMGQTGGIRPEPGVEEFIVAELPELADGMAPNHSELQKLAGQRIETVAEAVAACRSIIRRGPQVILVKHLHDRNSPADRFNMLVVTETEAWIGQRPLYAFPRHPVGVGDLTSAIFVARRLRGDSVRAAFEHTLAAVHAVVKATYDARRYELELVAAQDEIARPSEWFGAWVTGAD.

Residues S9 and 44–45 (MQ) contribute to the substrate site. Residues D111, A142, E147, and K180 each contribute to the ATP site. A substrate-binding site is contributed by D221.

This sequence belongs to the pyridoxine kinase family. PdxY subfamily. In terms of assembly, homodimer. It depends on Mg(2+) as a cofactor.

It catalyses the reaction pyridoxal + ATP = pyridoxal 5'-phosphate + ADP + H(+). Its pathway is cofactor metabolism; pyridoxal 5'-phosphate salvage; pyridoxal 5'-phosphate from pyridoxal: step 1/1. In terms of biological role, pyridoxal kinase involved in the salvage pathway of pyridoxal 5'-phosphate (PLP). Catalyzes the phosphorylation of pyridoxal to PLP. The polypeptide is Pyridoxal kinase PdxY (Burkholderia pseudomallei (strain K96243)).